The primary structure comprises 379 residues: L-lactate dehydrogenase (379 aa).

One can recognise an FMN hydroxy acid dehydrogenase domain in the interval 1–379 (MIISSSTDYR…ISPDSLVRGL (379 aa)). Tyr24 serves as a coordination point for substrate. FMN-binding residues include Ser106 and Gln127. Tyr129 contributes to the substrate binding site. Position 155 (Thr155) interacts with FMN. Arg164 is a binding site for substrate. Lys251 lines the FMN pocket. The Proton acceptor role is filled by His275. Position 278 (Arg278) interacts with substrate. 306 to 330 (DSGIRSGLDVVRMIAQGADGVLIGR) contacts FMN.

This sequence belongs to the FMN-dependent alpha-hydroxy acid dehydrogenase family. FMN serves as cofactor.

It localises to the cell inner membrane. It carries out the reaction (S)-lactate + A = pyruvate + AH2. Catalyzes the conversion of L-lactate to pyruvate. Is coupled to the respiratory chain. In Allorhizobium ampelinum (strain ATCC BAA-846 / DSM 112012 / S4) (Agrobacterium vitis (strain S4)), this protein is L-lactate dehydrogenase.